The primary structure comprises 599 residues: Serine/threonine-protein kinase haspin homolog (599 aa).

The Protein kinase domain maps to 287–599; the sequence is PESIVKIGEG…FSDMLMDQIS (313 aa). ATP is bound by residues 293-301, Lys310, 407-412, 448-453, and 486-488; these read IGEGTYGEA, EHGGKD, DLHWGN, and DFT. Asp448 serves as the catalytic Proton acceptor.

This sequence belongs to the protein kinase superfamily. Ser/Thr protein kinase family. Haspin subfamily. In terms of tissue distribution, expressed in meristems and primordia of root tips, lateral roots, shoot apex, leaves and flowers.

Its subcellular location is the cytoplasm. It localises to the perinuclear region. The protein localises to the nucleus. The protein resides in the chromosome. It is found in the cytoskeleton. Its subcellular location is the phragmoplast. It catalyses the reaction L-seryl-[protein] + ATP = O-phospho-L-seryl-[protein] + ADP + H(+). The enzyme catalyses L-threonyl-[protein] + ATP = O-phospho-L-threonyl-[protein] + ADP + H(+). Functionally, threonine-protein kinase that phosphorylates histone H3 in vitro at 'Thr-3' (H3T3ph) and 'Thr-11' (H3T11ph), but not at 'Ser-10' (H3S10ph) or 'Ser-28' (H3S28ph). Plays a role in mitotic cell division during plant growth. Threonine-protein kinase that phosphorylates histone H3 in vitro at 'Thr-3' (H3T3ph), but not at 'Thr-11' (H3T11ph), 'Ser-10' (H3S10ph) or 'Ser-28' (H3S28ph). Involved in histone H3 phosphorylation in mitotic cells. Contributes to organ and plant development, as well as embryonic patterning. This chain is Serine/threonine-protein kinase haspin homolog, found in Arabidopsis thaliana (Mouse-ear cress).